We begin with the raw amino-acid sequence, 101 residues long: MAGQKIRIRLKAYDHEAIDASARKIVETVVRTGASVVGPVPLPTEKNVYCVVRSPHKYKDSREHFEMRTHKRLIDIIDPTPKTVDALMRIDLPASVDVNIQ.

The protein belongs to the universal ribosomal protein uS10 family. In terms of assembly, part of the 30S ribosomal subunit.

In terms of biological role, involved in the binding of tRNA to the ribosomes. This is Small ribosomal subunit protein uS10 from Mycobacterium ulcerans (strain Agy99).